The primary structure comprises 233 residues: UPF0758 protein Rcas_0037 (233 aa).

The 123-residue stretch at 107–229 (QIRSPTDAAQ…FVSMRERGLA (123 aa)) folds into the MPN domain. Zn(2+) contacts are provided by H178, H180, and D191. Positions 178–191 (HNHPSGDPTPSPED) match the JAMM motif motif.

It belongs to the UPF0758 family.

In Roseiflexus castenholzii (strain DSM 13941 / HLO8), this protein is UPF0758 protein Rcas_0037.